Here is a 155-residue protein sequence, read N- to C-terminus: Small ribosomal subunit protein uS7c (155 aa).

This sequence belongs to the universal ribosomal protein uS7 family. As to quaternary structure, part of the 30S ribosomal subunit.

The protein localises to the plastid. It is found in the chloroplast. One of the primary rRNA binding proteins, it binds directly to 16S rRNA where it nucleates assembly of the head domain of the 30S subunit. The protein is Small ribosomal subunit protein uS7c (rps7) of Cedrus deodara (Deodar cedar).